A 295-amino-acid polypeptide reads, in one-letter code: Methionine aminopeptidase (295 aa).

Residue H63 participates in substrate binding. The a divalent metal cation site is built by D83, D94, and H154. H162 is a binding site for substrate. A divalent metal cation contacts are provided by E188 and E281.

This sequence belongs to the peptidase M24A family. Methionine aminopeptidase archaeal type 2 subfamily. As to quaternary structure, monomer. Co(2+) is required as a cofactor. The cofactor is Zn(2+). It depends on Mn(2+) as a cofactor. Requires Fe(2+) as cofactor.

It carries out the reaction Release of N-terminal amino acids, preferentially methionine, from peptides and arylamides.. In terms of biological role, removes the N-terminal methionine from nascent proteins. The N-terminal methionine is often cleaved when the second residue in the primary sequence is small and uncharged (Met-Ala-, Cys, Gly, Pro, Ser, Thr, or Val). The sequence is that of Methionine aminopeptidase from Thermococcus kodakarensis (strain ATCC BAA-918 / JCM 12380 / KOD1) (Pyrococcus kodakaraensis (strain KOD1)).